The sequence spans 936 residues: Protein translocase subunit SecA (936 aa).

Residues Gln-87, 105–109, and Asp-515 contribute to the ATP site; that span reads GEGKT. Zn(2+) is bound by residues Cys-920, Cys-922, Cys-931, and His-932.

It belongs to the SecA family. As to quaternary structure, monomer and homodimer. Part of the essential Sec protein translocation apparatus which comprises SecA, SecYEG and auxiliary proteins SecDF-YajC and YidC. Zn(2+) is required as a cofactor.

Its subcellular location is the cell inner membrane. The protein resides in the cytoplasm. It catalyses the reaction ATP + H2O + cellular proteinSide 1 = ADP + phosphate + cellular proteinSide 2.. Part of the Sec protein translocase complex. Interacts with the SecYEG preprotein conducting channel. Has a central role in coupling the hydrolysis of ATP to the transfer of proteins into and across the cell membrane, serving both as a receptor for the preprotein-SecB complex and as an ATP-driven molecular motor driving the stepwise translocation of polypeptide chains across the membrane. This is Protein translocase subunit SecA from Paraburkholderia xenovorans (strain LB400).